Consider the following 290-residue polypeptide: S-methyl-5'-thioadenosine phosphorylase 2 (290 aa).

Residues serine 14, 57-58 (RH), and 90-91 (SA) each bind phosphate. Residue methionine 185 coordinates substrate. Residue serine 186 coordinates phosphate. 209 to 211 (DYD) is a substrate binding site.

This sequence belongs to the PNP/MTAP phosphorylase family. MTAP subfamily. As to quaternary structure, homotrimer.

It is found in the cytoplasm. The protein resides in the nucleus. The catalysed reaction is S-methyl-5'-thioadenosine + phosphate = 5-(methylsulfanyl)-alpha-D-ribose 1-phosphate + adenine. The protein operates within amino-acid biosynthesis; L-methionine biosynthesis via salvage pathway; S-methyl-5-thio-alpha-D-ribose 1-phosphate from S-methyl-5'-thioadenosine (phosphorylase route): step 1/1. In terms of biological role, catalyzes the reversible phosphorylation of S-methyl-5'-thioadenosine (MTA) to adenine and 5-methylthioribose-1-phosphate. Involved in the breakdown of MTA, a major by-product of polyamine biosynthesis. Responsible for the first step in the methionine salvage pathway after MTA has been generated from S-adenosylmethionine. Has broad substrate specificity with 6-aminopurine nucleosides as preferred substrates. This Puccinia graminis f. sp. tritici (strain CRL 75-36-700-3 / race SCCL) (Black stem rust fungus) protein is S-methyl-5'-thioadenosine phosphorylase 2.